Reading from the N-terminus, the 527-residue chain is Serine/threonine-protein kinase NLK (527 aa).

Sufficient for interaction with DAPK3 regions lie at residues 1–125 and 124–416; these read MSLC…KAHH and HHHQ…SKRI. 2 required for interaction with TAB2 regions span residues 1–304 and 434–527; these read MSLC…VVTQ and YHTC…LVWE. Disordered regions lie at residues 22–72 and 90–139; these read AAAA…SSAA and QQPY…LDIE. A compositionally biased stretch (basic residues) spans 26 to 54; it reads GHHHHHHHHLPHLPPPHLHHHHHPQHHLH. Residues 103 to 119 are compositionally biased toward low complexity; sequence PGPAAAAPAQVQAAAAA. A compositionally biased stretch (basic residues) spans 122-131; the sequence is KAHHHQHSHH. One can recognise a Protein kinase domain in the interval 138-427; the sequence is IEPDRPIGYG…AKDALAHPYL (290 aa). ATP contacts are provided by residues 144 to 152 and K167; that span reads IGYGAFGVV. The active-site Proton acceptor is the D264. T298 carries the post-translational modification Phosphothreonine; by autocatalysis. The short motif at 298–300 is the TQE element; that stretch reads TQE. Residues 428–527 form a required for homodimerization and kinase activation and localization to the nucleus region; it reads DEGRLRYHTC…EMPPSPLVWE (100 aa). Phosphoserine is present on S522.

Belongs to the protein kinase superfamily. CMGC Ser/Thr protein kinase family. MAP kinase subfamily. In terms of assembly, homodimer. Homodimerization is required for intermolecular autophosphorylation, kinase activation and nuclear localization. Interacts with RNF138/NARF. Interacts with FOXO1 and FOXO3. Interacts with the upstream activating kinases HIPK2 and MAP3K7/TAK1. Interaction with MAP3K7/TAK1 seems to be indirect, and may be mediated by other proteins such as STAT3, TAB1 and TAB2. Interacts with and phosphorylates a number of transcription factors including FOXO4, LEF1, MYB, MYBL1, MYBL2, NOTCH1 and TCF7L2/TCF4. May interact with components of cullin-RING-based SCF (SKP1-CUL1-F-box protein) E3 ubiquitin-protein ligase complexes. Interacts with MEF2A. Interacts with ATF5; the interaction stabilizes ATF5 at the protein level in a kinase-independent manner. Mg(2+) serves as cofactor. Phosphorylated on Thr-298. Intermolecular autophosphorylation on Thr-298 activates the enzyme. In terms of tissue distribution, expressed at high levels in the brain, and at lower levels in heart, kidney, lung and liver.

Its subcellular location is the nucleus. The protein localises to the cytoplasm. It catalyses the reaction L-seryl-[protein] + ATP = O-phospho-L-seryl-[protein] + ADP + H(+). The enzyme catalyses L-threonyl-[protein] + ATP = O-phospho-L-threonyl-[protein] + ADP + H(+). Its activity is regulated as follows. Activated by the non-canonical Wnt signaling pathway, in which WNT5A leads to activation of MAP3K7/TAK1 and HIPK2, which subsequently phosphorylates and activates this protein. Activated by dimerization and subsequent intermolecular autophosphorylation on Thr-298. Other cytokines such as IL6 may also activate this regulatory circuit. Serine/threonine-protein kinase that regulates a number of transcription factors with key roles in cell fate determination. Positive effector of the non-canonical Wnt signaling pathway, acting downstream of WNT5A, MAP3K7/TAK1 and HIPK2. Negative regulator of the canonical Wnt/beta-catenin signaling pathway. Binds to and phosphorylates TCF7L2/TCF4 and LEF1, promoting the dissociation of the TCF7L2/LEF1/beta-catenin complex from DNA, as well as the ubiquitination and subsequent proteolysis of LEF1. Together these effects inhibit the transcriptional activation of canonical Wnt/beta-catenin target genes. Negative regulator of the Notch signaling pathway. Binds to and phosphorylates NOTCH1, thereby preventing the formation of a transcriptionally active ternary complex of NOTCH1, RBPJ/RBPSUH and MAML1. Negative regulator of the MYB family of transcription factors. Phosphorylation of MYB leads to its subsequent proteolysis while phosphorylation of MYBL1 and MYBL2 inhibits their interaction with the coactivator CREBBP. Other transcription factors may also be inhibited by direct phosphorylation of CREBBP itself. Acts downstream of IL6 and MAP3K7/TAK1 to phosphorylate STAT3, which is in turn required for activation of NLK by MAP3K7/TAK1. Upon IL1B stimulus, cooperates with ATF5 to activate the transactivation activity of C/EBP subfamily members. Phosphorylates ATF5 but also stabilizes ATF5 protein levels in a kinase-independent manner. Acts as an inhibitor of the mTORC1 complex in response to osmotic stress by mediating phosphorylation of RPTOR, thereby preventing recruitment of the mTORC1 complex to lysosomes. The chain is Serine/threonine-protein kinase NLK from Mus musculus (Mouse).